The primary structure comprises 87 residues: Neurotoxin Cex4 (87 aa).

A signal peptide spans 1–19 (MNSLLMITACLFLIGTVWA). Residues 20 to 85 (KEGYLVNKST…TYPLPNKSCG (66 aa)) form the LCN-type CS-alpha/beta domain. Cystine bridges form between cysteine 31–cysteine 84, cysteine 35–cysteine 60, cysteine 44–cysteine 65, and cysteine 48–cysteine 67. Cysteine amide is present on cysteine 84. Residues 85–87 (GRK) constitute a propeptide that is removed on maturation.

The protein belongs to the long (4 C-C) scorpion toxin superfamily. Sodium channel inhibitor family. Beta subfamily. Expressed by the venom gland.

It is found in the secreted. In terms of biological role, beta toxins bind voltage-independently at site-4 of sodium channels (Nav) and shift the voltage of activation toward more negative potentials thereby affecting sodium channel activation and promoting spontaneous and repetitive firing. This is Neurotoxin Cex4 from Centruroides exilicauda (Bark scorpion).